Consider the following 252-residue polypeptide: Probable transcriptional regulatory protein all4276 (252 aa).

This sequence belongs to the TACO1 family.

It localises to the cytoplasm. The protein is Probable transcriptional regulatory protein all4276 of Nostoc sp. (strain PCC 7120 / SAG 25.82 / UTEX 2576).